A 447-amino-acid polypeptide reads, in one-letter code: Probable glycine dehydrogenase (decarboxylating) subunit 1 (447 aa).

Belongs to the GcvP family. N-terminal subunit subfamily. The glycine cleavage system is composed of four proteins: P, T, L and H. In this organism, the P 'protein' is a heterodimer of two subunits.

It carries out the reaction N(6)-[(R)-lipoyl]-L-lysyl-[glycine-cleavage complex H protein] + glycine + H(+) = N(6)-[(R)-S(8)-aminomethyldihydrolipoyl]-L-lysyl-[glycine-cleavage complex H protein] + CO2. The glycine cleavage system catalyzes the degradation of glycine. The P protein binds the alpha-amino group of glycine through its pyridoxal phosphate cofactor; CO(2) is released and the remaining methylamine moiety is then transferred to the lipoamide cofactor of the H protein. The sequence is that of Probable glycine dehydrogenase (decarboxylating) subunit 1 from Sulfolobus acidocaldarius (strain ATCC 33909 / DSM 639 / JCM 8929 / NBRC 15157 / NCIMB 11770).